The following is a 930-amino-acid chain: Isoleucine--tRNA ligase (930 aa).

The 'HIGH' region signature appears at 57–67 (PYANGNIHVGH). Glu-554 contacts L-isoleucyl-5'-AMP. Positions 595 to 599 (KMSKS) match the 'KMSKS' region motif. Lys-598 provides a ligand contact to ATP. Zn(2+) is bound by residues Cys-888, Cys-891, Cys-908, and Cys-911.

Belongs to the class-I aminoacyl-tRNA synthetase family. IleS type 1 subfamily. In terms of assembly, monomer. The cofactor is Zn(2+).

The protein localises to the cytoplasm. It carries out the reaction tRNA(Ile) + L-isoleucine + ATP = L-isoleucyl-tRNA(Ile) + AMP + diphosphate. Functionally, catalyzes the attachment of isoleucine to tRNA(Ile). As IleRS can inadvertently accommodate and process structurally similar amino acids such as valine, to avoid such errors it has two additional distinct tRNA(Ile)-dependent editing activities. One activity is designated as 'pretransfer' editing and involves the hydrolysis of activated Val-AMP. The other activity is designated 'posttransfer' editing and involves deacylation of mischarged Val-tRNA(Ile). The sequence is that of Isoleucine--tRNA ligase from Streptococcus pneumoniae (strain P1031).